The chain runs to 1215 residues: Reverse gyrase 2 (1215 aa).

The RG N-terminal-type zinc-finger motif lies at 3–44 (GGVNAVYMGLCYNCGGNIDEDRLEKGLPCARCLPSPPRRATP). The Zn(2+) site is built by C13, C16, C31, and C34. ATP is bound by residues Q89 and 106 to 113 (APTGVGKS). The 157-residue stretch at 93–249 (AKRLVKGDSF…SLVKARLKLY (157 aa)) folds into the Helicase ATP-binding domain. The short motif at 209–212 (DDVD) is the DEAD box element. Residues 614 to 1215 (VRVKTTLLVV…TGDVMGQSEA (602 aa)) are topoisomerase I. The 166-residue stretch at 618–783 (TTLLVVESPT…NVRRGRFHEV (166 aa)) folds into the Toprim domain. Mg(2+) is bound at residue E624. The segment at 702–729 (IKRCLDCGAQHTSSSPFCPRCGSPRQVD) adopts an RG C-terminal-type zinc-finger fold. The Zn(2+) site is built by C705, C708, C719, and C722. D752 lines the Mg(2+) pocket. The region spanning 799–1200 (EKSLIEAQKV…SVWRMVDEAV (402 aa)) is the Topo IA-type catalytic domain. Residue Y943 is the O-(5'-phospho-DNA)-tyrosine intermediate of the active site.

In the N-terminal section; belongs to the DEAD box helicase family. DDVD subfamily. It in the C-terminal section; belongs to the type IA topoisomerase family. Monomer. Requires Zn(2+) as cofactor. It depends on Mg(2+) as a cofactor.

The protein localises to the cytoplasm. It catalyses the reaction ATP + H2O = ADP + phosphate + H(+). Modifies the topological state of DNA by introducing positive supercoils in an ATP-dependent process, increasing the linking number in steps of +1. Binds to single-stranded DNA, transiently cleaves and then rejoins the ends, introducing a positive supercoil in the process. The scissile phosphodiester is attacked by the catalytic tyrosine of the enzyme, resulting in the formation of a DNA-(5'-phosphotyrosyl)-enzyme intermediate. Probably involved in rewinding DNA strands in regions of the chromosome that have opened up to allow replication, transcription, DNA repair and/or for DNA protection. This chain is Reverse gyrase 2, found in Aeropyrum pernix (strain ATCC 700893 / DSM 11879 / JCM 9820 / NBRC 100138 / K1).